The chain runs to 218 residues: uncharacterized protein (218 aa).

One can recognise a Response regulatory domain in the interval 7–123 (RVALADDQPL…ELIDAIRAAA (117 aa)). Position 58 is a 4-aspartylphosphate (Asp-58). An HTH luxR-type domain is found at 150–215 (AEELAEPFTK…QAVVFAIRNG (66 aa)). Positions 174-193 (NEDIAEKLFVSESTVKTHVH) form a DNA-binding region, H-T-H motif.

In terms of processing, phosphorylated by YxjM.

It is found in the cytoplasm. In terms of biological role, probable member of the two-component regulatory system YxjM/YxjL. This is an uncharacterized protein from Bacillus subtilis (strain 168).